The following is a 243-amino-acid chain: VQ motif-containing protein 33 (243 aa).

A compositionally biased stretch (polar residues) spans 1–16 (MEVSTSSMSSKPEQMQ). The segment at 1–49 (MEVSTSSMSSKPEQMQNPPPMISSPRFQPQIISPHHHDQHQHLSNPYPT) is disordered. The VQ motif lies at 59-68 (FKQVVQMLTG). Disordered stretches follow at residues 69-98 (SSTD…SIPP) and 138-162 (FTGG…SENI). 2 positions are modified to phosphoserine: serine 83 and serine 95. The span at 84-98 (PVNNNNKGSSFSIPP) shows a compositional bias: polar residues. Residue threonine 139 is modified to Phosphothreonine. 5 positions are modified to phosphoserine: serine 148, serine 152, serine 165, serine 167, and serine 178. Low complexity predominate over residues 149-162 (PRFSPRNSSSSENI). The disordered stretch occupies residues 180 to 243 (VTPLRSNDDP…FPVASPARNS (64 aa)). Position 181 is a phosphothreonine (threonine 181). Residues 191 to 201 (NKSSPLSLGNS) are compositionally biased toward polar residues. Residues serine 218 and serine 221 each carry the phosphoserine modification. A Phosphothreonine modification is found at threonine 222. Residue serine 238 is modified to Phosphoserine.

Post-translationally, phosphorylated on serine and threonine residues by MPK6.

Its subcellular location is the nucleus. Its function is as follows. May modulate WRKY transcription factor activities. The chain is VQ motif-containing protein 33 from Arabidopsis thaliana (Mouse-ear cress).